The sequence spans 456 residues: Bifunctional protein GlmU (456 aa).

A pyrophosphorylase region spans residues 1 to 229; sequence MSNSSMSVVI…LSEVEGVNNR (229 aa). UDP-N-acetyl-alpha-D-glucosamine is bound by residues 11–14, Lys25, Gln76, 81–82, 103–105, Gly140, Glu154, Asn169, and Asn227; these read LAAG, GT, and YGD. A Mg(2+)-binding site is contributed by Asp105. Asn227 provides a ligand contact to Mg(2+). Residues 230-250 are linker; sequence LQLSALERVFQTEQAEKLLLA. An N-acetyltransferase region spans residues 251-456; sequence GVMLLDPSRF…QGWKRPVKKK (206 aa). Positions 333 and 351 each coordinate UDP-N-acetyl-alpha-D-glucosamine. His363 (proton acceptor) is an active-site residue. UDP-N-acetyl-alpha-D-glucosamine-binding residues include Tyr366 and Asn377. Acetyl-CoA contacts are provided by residues Ala380, 386–387, Ser405, Ala423, and Arg440; that span reads NY.

It in the N-terminal section; belongs to the N-acetylglucosamine-1-phosphate uridyltransferase family. The protein in the C-terminal section; belongs to the transferase hexapeptide repeat family. As to quaternary structure, homotrimer. It depends on Mg(2+) as a cofactor.

It localises to the cytoplasm. The catalysed reaction is alpha-D-glucosamine 1-phosphate + acetyl-CoA = N-acetyl-alpha-D-glucosamine 1-phosphate + CoA + H(+). The enzyme catalyses N-acetyl-alpha-D-glucosamine 1-phosphate + UTP + H(+) = UDP-N-acetyl-alpha-D-glucosamine + diphosphate. It functions in the pathway nucleotide-sugar biosynthesis; UDP-N-acetyl-alpha-D-glucosamine biosynthesis; N-acetyl-alpha-D-glucosamine 1-phosphate from alpha-D-glucosamine 6-phosphate (route II): step 2/2. The protein operates within nucleotide-sugar biosynthesis; UDP-N-acetyl-alpha-D-glucosamine biosynthesis; UDP-N-acetyl-alpha-D-glucosamine from N-acetyl-alpha-D-glucosamine 1-phosphate: step 1/1. It participates in bacterial outer membrane biogenesis; LPS lipid A biosynthesis. In terms of biological role, catalyzes the last two sequential reactions in the de novo biosynthetic pathway for UDP-N-acetylglucosamine (UDP-GlcNAc). The C-terminal domain catalyzes the transfer of acetyl group from acetyl coenzyme A to glucosamine-1-phosphate (GlcN-1-P) to produce N-acetylglucosamine-1-phosphate (GlcNAc-1-P), which is converted into UDP-GlcNAc by the transfer of uridine 5-monophosphate (from uridine 5-triphosphate), a reaction catalyzed by the N-terminal domain. This Yersinia pseudotuberculosis serotype O:1b (strain IP 31758) protein is Bifunctional protein GlmU.